The following is a 723-amino-acid chain: Catalase-peroxidase (723 aa).

Positions 98-226 (WHAAGSYRAA…LAAVQMGLIY (129 aa)) form a cross-link, tryptophyl-tyrosyl-methioninium (Trp-Tyr) (with M-252). Histidine 99 functions as the Proton acceptor in the catalytic mechanism. The segment at residues 226 to 252 (YVNPEGVNGKPDPLKTAAQVRETFARM) is a cross-link (tryptophyl-tyrosyl-methioninium (Tyr-Met) (with W-98)). Residue histidine 267 participates in heme b binding. The disordered stretch occupies residues 267 to 286 (HTVGKTHGNGRAENLGPSPE).

It belongs to the peroxidase family. Peroxidase/catalase subfamily. In terms of assembly, homodimer or homotetramer. Requires heme b as cofactor. Formation of the three residue Trp-Tyr-Met cross-link is important for the catalase, but not the peroxidase activity of the enzyme.

The enzyme catalyses H2O2 + AH2 = A + 2 H2O. It catalyses the reaction 2 H2O2 = O2 + 2 H2O. Its function is as follows. Bifunctional enzyme with both catalase and broad-spectrum peroxidase activity. In Thioalkalivibrio sulfidiphilus (strain HL-EbGR7), this protein is Catalase-peroxidase.